The chain runs to 124 residues: Aspartate 1-decarboxylase (124 aa).

Ser25 acts as the Schiff-base intermediate with substrate; via pyruvic acid in catalysis. A Pyruvic acid (Ser) modification is found at Ser25. Thr57 contributes to the substrate binding site. Residue Tyr58 is the Proton donor of the active site. 73 to 75 (GAA) provides a ligand contact to substrate.

The protein belongs to the PanD family. As to quaternary structure, heterooctamer of four alpha and four beta subunits. It depends on pyruvate as a cofactor. Post-translationally, is synthesized initially as an inactive proenzyme, which is activated by self-cleavage at a specific serine bond to produce a beta-subunit with a hydroxyl group at its C-terminus and an alpha-subunit with a pyruvoyl group at its N-terminus.

The protein localises to the cytoplasm. It catalyses the reaction L-aspartate + H(+) = beta-alanine + CO2. Its pathway is cofactor biosynthesis; (R)-pantothenate biosynthesis; beta-alanine from L-aspartate: step 1/1. Catalyzes the pyruvoyl-dependent decarboxylation of aspartate to produce beta-alanine. This Syntrophobacter fumaroxidans (strain DSM 10017 / MPOB) protein is Aspartate 1-decarboxylase.